Here is a 190-residue protein sequence, read N- to C-terminus: Putative manganese efflux pump MntP (190 aa).

Transmembrane regions (helical) follow at residues 3-23, 37-57, 72-88, 111-131, 138-158, and 164-184; these read FLQI…CSVV, LVLA…GWVI, HWIA…KMIW, IILG…LAFV, VALS…WIGH, and FGKW…ANIV.

It belongs to the MntP (TC 9.B.29) family.

It localises to the cell membrane. In terms of biological role, probably functions as a manganese efflux pump. In Corynebacterium glutamicum (strain R), this protein is Putative manganese efflux pump MntP.